The chain runs to 1163 residues: Reticulon-4 (1163 aa).

The residue at position 1 (Met1) is an N-acetylmethionine. Disordered regions lie at residues 1-184 (MEDI…AASE) and 244-270 (SAVSSSEGTIEETLNEASKELPERATN). Over 1–989 (MEDIDQSSLV…LYWRDIKKTG (989 aa)) the chain is Cytoplasmic. Phosphoserine occurs at positions 7 and 16. Residues 7–16 (SSLVSSSTDS) show a composition bias toward low complexity. Residues 31–55 (EPEDEEDEEEEEDEEEDDEDLEELE) show a composition bias toward acidic residues. Low complexity predominate over residues 62–79 (AAGLSAAAVPPAAAAPLL). The span at 87–101 (PPAPRGPLPAAPPAA) shows a compositional bias: pro residues. Residue Ser107 is modified to Phosphoserine. Residues 138–147 (ARPPPPPPAG) show a composition bias toward pro residues. A phosphoserine mark is found at Ser149, Ser169, and Ser171. Ser329, Ser333, and Ser343 each carry phosphoserine. The residue at position 347 (Thr347) is a Phosphothreonine. Over residues 406-423 (DSLEQKSLGKDSEGRNED) the composition is skewed to basic and acidic residues. 2 disordered regions span residues 406 to 437 (DSLEQKSLGKDSEGRNEDASFPSTPEPVKDSS) and 454 to 474 (TANTFPLLEDHTSENKTDEKK). Phosphoserine is present on Ser425. Thr429 carries the post-translational modification Phosphothreonine. Positions 461–474 (LEDHTSENKTDEKK) are enriched in basic and acidic residues. Phosphoserine occurs at positions 488, 689, 726, 766, and 830. Thr832 carries the phosphothreonine modification. Ser855, Ser922, and Ser962 each carry phosphoserine. The 188-residue stretch at 976–1163 (VVDLLYWRDI…KIPGLKRKAD (188 aa)) folds into the Reticulon domain. The helical transmembrane segment at 990–1010 (VVFGASLFLLLSLTVFSIVSV) threads the bilayer. Residues 1011–1104 (TAYIALALLS…LMWVFTYVGA (94 aa)) are Lumenal-facing. Lys1075 bears the N6-acetyllysine mark. A helical transmembrane segment spans residues 1105 to 1125 (LFNGLTLLILALISLFSIPVI). Topologically, residues 1126-1163 (YERHQVQIDHYLGLANKSVKDAMAKIQAKIPGLKRKAD) are cytoplasmic.

Binds to RTN4R. Interacts with ATL1. Interacts with TMEM170A. Interacts with RTN4IP1. In terms of assembly, interacts in trans with CNTNAP1. Interacts with REEP5. Interacts with synaptic plasticity regulator PANTS; the interaction results in enhanced RTN4-mediated inhibition of AMPA receptor clustering. Interacts with GPR50. As to quaternary structure, homodimer. Interacts with BAD/Bcl-xl and BCL2. Interact with RTN3. Interacts with NGBR. Interacts with SPTLC1. Interacts with GRAMD4. Interacts with CDH5. Interacts with BACE1 and BACE2. Interacts with REEP5. Interacts with RETREG3. Interacts with BACE1 and BACE2. Interacts with TMEM33. In terms of tissue distribution, isoforms A, B and C are present in optic nerve, spinal cord and cerebral cortex. Isoforms A and B are present in dorsal root ganglion, sciatic nerve and PC12 cells after longer exposure. Isoforms B and C are detected in kidney, cartilage, skin, lung and spleen. Isoform C is expressed at high level in skeletal muscle. In adult animals isoform A is expressed mainly in the nervous system.

The protein resides in the endoplasmic reticulum membrane. It localises to the cell membrane. The protein localises to the synapse. It is found in the cell junction. In terms of biological role, required to induce the formation and stabilization of endoplasmic reticulum (ER) tubules. They regulate membrane morphogenesis in the ER by promoting tubular ER production. They influence nuclear envelope expansion, nuclear pore complex formation and proper localization of inner nuclear membrane proteins. However each isoform have specific functions mainly depending on their tissue expression specificities. Its function is as follows. Developmental neurite growth regulatory factor with a role as a negative regulator of axon-axon adhesion and growth, and as a facilitator of neurite branching. Regulates neurite fasciculation, branching and extension in the developing nervous system. Involved in down-regulation of growth, stabilization of wiring and restriction of plasticity in the adult CNS. Regulates the radial migration of cortical neurons via an RTN4R-LINGO1 containing receptor complex. Acts as a negative regulator of central nervous system angiogenesis. Inhibits spreading, migration and sprouting of primary brain microvascular endothelial cells (MVECs). Also induces the retraction of MVECs lamellipodia and filopodia in a ROCK pathway-dependent manner. Mainly function in endothelial cells and vascular smooth muscle cells, is also involved in immune system regulation. Modulator of vascular remodeling, promotes the migration of endothelial cells but inhibits the migration of vascular smooth muscle cells. Regulates endothelial sphingolipid biosynthesis with direct effects on vascular function and blood pressure. Inhibits serine palmitoyltransferase, SPTLC1, the rate-limiting enzyme of the novo sphingolipid biosynthetic pathway, thereby controlling production of endothelial sphingosine-1-phosphate (S1P). Required to promote macrophage homing and functions such as cytokine/chemokine gene expression involved in angiogenesis, arteriogenesis and tissue repair. Mediates ICAM1 induced transendothelial migration of leukocytes such as monocytes and neutrophils and acute inflammation. Necessary for immune responses triggered by nucleic acid sensing TLRs, such as TLR9, is required for proper TLR9 location to endolysosomes. Also involved in immune response to LPS. Plays a role in liver regeneration through the modulation of hepatocytes proliferation. Reduces the anti-apoptotic activity of Bcl-xl and Bcl-2. This is likely consecutive to their change in subcellular location, from the mitochondria to the endoplasmic reticulum, after binding and sequestration. With isoform C, inhibits BACE1 activity and amyloid precursor protein processing. Functionally, regulates cardiomyocyte apoptosis upon hypoxic conditions. With isoform B, inhibits BACE1 activity and amyloid precursor protein processing. This Rattus norvegicus (Rat) protein is Reticulon-4 (Rtn4).